A 58-amino-acid polypeptide reads, in one-letter code: uncharacterized protein (58 aa).

This is an uncharacterized protein from Dictyostelium discoideum (Social amoeba).